The sequence spans 487 residues: Inosine-5'-monophosphate dehydrogenase (487 aa).

CBS domains lie at 93–149 and 153–214; these read IVSD…NKTV and MTPK…CKDE. Residues aspartate 248, 248-250, and 298-300 contribute to the NAD(+) site; these read DSS and GIG. 2 residues coordinate K(+): glycine 300 and glycine 302. An IMP-binding site is contributed by serine 303. Cysteine 305 provides a ligand contact to K(+). The Thioimidate intermediate role is filled by cysteine 305. IMP-binding positions include 338 to 340, 361 to 362, and 385 to 389; these read DGG, GS, and YRGMG. Catalysis depends on arginine 401, which acts as the Proton acceptor. Glutamate 415 serves as a coordination point for IMP. Positions 469, 470, and 471 each coordinate K(+).

Belongs to the IMPDH/GMPR family. Homotetramer. The cofactor is K(+).

The catalysed reaction is IMP + NAD(+) + H2O = XMP + NADH + H(+). The protein operates within purine metabolism; XMP biosynthesis via de novo pathway; XMP from IMP: step 1/1. Its activity is regulated as follows. Mycophenolic acid (MPA) is a non-competitive inhibitor that prevents formation of the closed enzyme conformation by binding to the same site as the amobile flap. In contrast, mizoribine monophosphate (MZP) is a competitive inhibitor that induces the closed conformation. MPA is a potent inhibitor of mammalian IMPDHs but a poor inhibitor of the bacterial enzymes. MZP is a more potent inhibitor of bacterial IMPDH. Its function is as follows. Catalyzes the conversion of inosine 5'-phosphate (IMP) to xanthosine 5'-phosphate (XMP), the first committed and rate-limiting step in the de novo synthesis of guanine nucleotides, and therefore plays an important role in the regulation of cell growth. The sequence is that of Inosine-5'-monophosphate dehydrogenase from Pasteurella multocida (strain Pm70).